The sequence spans 684 residues: UvrABC system protein B (684 aa).

Residues 32–420 (DGVLRGDRWQ…GGVVVEQLIR (389 aa)) enclose the Helicase ATP-binding domain. 45 to 52 (GVTGSGKT) contributes to the ATP binding site. The Beta-hairpin motif lies at 98-121 (YYDFYQPEAYIPSLDKYIAKDLKI). Residues 437–603 (QIDHLLARIR…SIIKSVDQVL (167 aa)) enclose the Helicase C-terminal domain. Residues 643–678 (MLMVAEMNAEMQKAAEQTDYEKAAYLRDEILMLQER) enclose the UVR domain.

The protein belongs to the UvrB family. As to quaternary structure, forms a heterotetramer with UvrA during the search for lesions. Interacts with UvrC in an incision complex.

It localises to the cytoplasm. The UvrABC repair system catalyzes the recognition and processing of DNA lesions. A damage recognition complex composed of 2 UvrA and 2 UvrB subunits scans DNA for abnormalities. Upon binding of the UvrA(2)B(2) complex to a putative damaged site, the DNA wraps around one UvrB monomer. DNA wrap is dependent on ATP binding by UvrB and probably causes local melting of the DNA helix, facilitating insertion of UvrB beta-hairpin between the DNA strands. Then UvrB probes one DNA strand for the presence of a lesion. If a lesion is found the UvrA subunits dissociate and the UvrB-DNA preincision complex is formed. This complex is subsequently bound by UvrC and the second UvrB is released. If no lesion is found, the DNA wraps around the other UvrB subunit that will check the other stand for damage. This is UvrABC system protein B from Chlorobaculum tepidum (strain ATCC 49652 / DSM 12025 / NBRC 103806 / TLS) (Chlorobium tepidum).